We begin with the raw amino-acid sequence, 229 residues long: MLSGLIQRFEEEKMKHNQERVEELSLVHVDDTISQPPRYAPSAPMPSSMPTVALEILDKAMSNTTGATQTQKAEKAAFASYAEAFRDDVRLRQIKRHVNEQILPKLKSDLGGLKKKRAIIHMTLLIAAVVALLTSVCTLSSDMSVAFKLNGTSAEIPQWFKSLNPMLGVVNLGATFLMMVCAKSERSLNQQIDMIKKEVMKKQSYNDAVRMSFTEFSSVPLDGFELPLT.

The next 2 membrane-spanning stretches (helical) occupy residues 119-139 (IIHM…VCTL) and 162-182 (SLNP…MVCA).

It belongs to the orbivirus NS3 family. Forms homooligomers via coiled-coil motif. Interacts with host OPTN; this interaction inhibits innate immune response.

Its subcellular location is the host cell membrane. It localises to the host Golgi apparatus. Functionally, plays a role in the inhibition of host innate immune response. Interacts with host OPTN and thus inhibits the recruitment of TBK1 to the host Golgi apparatus. In turn, downstream partner IRF3 cannot be activated and IFN-beta production is impaired. Its function is as follows. Facilitates viral particle release either by increasing plasma membrane permeability through a viroporin-like activity or by viral budding. The protein is Non-structural protein P8 (Segment-10) of Antilocapra americana (Pronghorn).